A 279-amino-acid chain; its full sequence is Pantothenate synthetase (279 aa).

An ATP-binding site is contributed by 26 to 33 (MGNLHEGH). The active-site Proton donor is the histidine 33. Residue glutamine 57 coordinates (R)-pantoate. Residue glutamine 57 participates in beta-alanine binding. 144-147 (GKKD) serves as a coordination point for ATP. Residue glutamine 150 coordinates (R)-pantoate. Residues valine 173 and 181–184 (LSSR) contribute to the ATP site.

This sequence belongs to the pantothenate synthetase family. Homodimer.

The protein localises to the cytoplasm. It catalyses the reaction (R)-pantoate + beta-alanine + ATP = (R)-pantothenate + AMP + diphosphate + H(+). It functions in the pathway cofactor biosynthesis; (R)-pantothenate biosynthesis; (R)-pantothenate from (R)-pantoate and beta-alanine: step 1/1. Its function is as follows. Catalyzes the condensation of pantoate with beta-alanine in an ATP-dependent reaction via a pantoyl-adenylate intermediate. This chain is Pantothenate synthetase, found in Burkholderia vietnamiensis (strain G4 / LMG 22486) (Burkholderia cepacia (strain R1808)).